The chain runs to 32 residues: 24 kDa flagellin (32 aa).

It belongs to the archaeal flagellin family. In terms of processing, glycosylated.

The protein localises to the archaeal flagellum. In terms of biological role, flagellin is the subunit protein which polymerizes to form the filaments of archaeal flagella. In Methanospirillum hungatei, this protein is 24 kDa flagellin.